A 142-amino-acid polypeptide reads, in one-letter code: 2-aminomuconate deaminase (142 aa).

Belongs to the 2-aminomuconate deaminase family. As to quaternary structure, homotetramer.

The catalysed reaction is (2Z,4E)-2-aminomuconate + H2O = (3E)-2-oxohex-3-enedioate + NH4(+). Slightly inhibited by Pb(2+), Hg(+) and Cu(2+). Functionally, involved in the modified meta-cleavage pathway for the 2-aminophenol catabolism. Only active toward 2-aminomuconic acid. This chain is 2-aminomuconate deaminase (amnD), found in Pseudomonas sp.